The sequence spans 64 residues: Neuropeptide-like 4 (64 aa).

An N-terminal signal peptide occupies residues 1 to 18; it reads MFKLLVVVFAALFAAALA. 2 consecutive propeptides follow at residues 19–40 and 63–64; these read VPAPVARANPAPIPIASPEPAP and YG.

Its subcellular location is the secreted. The protein is Neuropeptide-like 4 (Nplp4) of Drosophila melanogaster (Fruit fly).